We begin with the raw amino-acid sequence, 125 residues long: Small ribosomal subunit protein uS12m (125 aa).

2 disordered regions span residues 1-50 and 106-125; these read MPTL…SAPR and GIPN…PKSI. The span at 10–23 shows a compositional bias: basic and acidic residues; it reads HGREEKRRTDRTRA.

The protein belongs to the universal ribosomal protein uS12 family.

Its subcellular location is the mitochondrion. Its function is as follows. Protein S12 is involved in the translation initiation step. The protein is Small ribosomal subunit protein uS12m (RPS12) of Magnolia soulangeana (Saucer magnolia).